The following is a 190-amino-acid chain: Orotate phosphoribosyltransferase (190 aa).

114 to 122 (EDVITTGGS) lines the 5-phospho-alpha-D-ribose 1-diphosphate pocket. Threonine 118 and arginine 146 together coordinate orotate.

This sequence belongs to the purine/pyrimidine phosphoribosyltransferase family. PyrE subfamily. Homodimer. It depends on Mg(2+) as a cofactor.

The enzyme catalyses orotidine 5'-phosphate + diphosphate = orotate + 5-phospho-alpha-D-ribose 1-diphosphate. It functions in the pathway pyrimidine metabolism; UMP biosynthesis via de novo pathway; UMP from orotate: step 1/2. In terms of biological role, catalyzes the transfer of a ribosyl phosphate group from 5-phosphoribose 1-diphosphate to orotate, leading to the formation of orotidine monophosphate (OMP). This Caldicellulosiruptor bescii (strain ATCC BAA-1888 / DSM 6725 / KCTC 15123 / Z-1320) (Anaerocellum thermophilum) protein is Orotate phosphoribosyltransferase.